Reading from the N-terminus, the 177-residue chain is 3-hydroxydecanoyl-[acyl-carrier-protein] dehydratase (177 aa).

The active site involves His-76.

Belongs to the thioester dehydratase family. FabA subfamily. Homodimer.

It is found in the cytoplasm. It carries out the reaction a (3R)-hydroxyacyl-[ACP] = a (2E)-enoyl-[ACP] + H2O. It catalyses the reaction (3R)-hydroxydecanoyl-[ACP] = (2E)-decenoyl-[ACP] + H2O. The catalysed reaction is (2E)-decenoyl-[ACP] = (3Z)-decenoyl-[ACP]. It functions in the pathway lipid metabolism; fatty acid biosynthesis. Functionally, necessary for the introduction of cis unsaturation into fatty acids. Catalyzes the dehydration of (3R)-3-hydroxydecanoyl-ACP to E-(2)-decenoyl-ACP and then its isomerization to Z-(3)-decenoyl-ACP. Can catalyze the dehydratase reaction for beta-hydroxyacyl-ACPs with saturated chain lengths up to 16:0, being most active on intermediate chain length. This chain is 3-hydroxydecanoyl-[acyl-carrier-protein] dehydratase, found in Actinobacillus succinogenes (strain ATCC 55618 / DSM 22257 / CCUG 43843 / 130Z).